The following is a 496-amino-acid chain: Galactose/methyl galactoside import ATP-binding protein MglA (496 aa).

ABC transporter domains lie at 5–240 and 243–496; these read LTIR…VGRT and KRFP…ARYL. 37–44 is an ATP binding site; the sequence is GENGAGKS.

It belongs to the ABC transporter superfamily. Galactose/methyl galactoside importer (TC 3.A.1.2.3) family. The complex is composed of one ATP-binding protein (MglA), two transmembrane proteins (MglC) and a solute-binding protein (MglB).

It is found in the cell inner membrane. It carries out the reaction D-galactose(out) + ATP + H2O = D-galactose(in) + ADP + phosphate + H(+). The enzyme catalyses methyl beta-D-galactoside(out) + ATP + H2O = methyl beta-D-galactoside(in) + ADP + phosphate + H(+). Its function is as follows. Part of the ABC transporter complex MglABC involved in galactose/methyl galactoside import. Responsible for energy coupling to the transport system. The chain is Galactose/methyl galactoside import ATP-binding protein MglA from Treponema pallidum (strain Nichols).